Consider the following 212-residue polypeptide: MGVTCVSQIPVAEGKSVQQTVELLTRKLEMLGAEKQGTFCVDCETYHTAASTLGSQGQTGKLMYVMHNSEYPLSCFALFENGPCLIADTNFDVLMVKLKGFFQSAKASKIETRGTRYQYCDFLVKVGTVTMGPSARGISVEVEYGPCVVASDCWSLLLEFLQSFLGSHTPGAPAVFGNRHDAVYGPADTMVQYMELFNKIRKQQQVPVAGIR.

The protein belongs to the Mediator complex subunit 20 family. As to quaternary structure, component of the Mediator complex, which is composed of MED1, MED4, MED6, MED7, MED8, MED9, MED10, MED11, MED12, MED13, MED13L, MED14, MED15, MED16, MED17, MED18, MED19, MED20, MED21, MED22, MED23, MED24, MED25, MED26, MED27, MED29, MED30, MED31, CCNC, CDK8 and CDC2L6/CDK11. The MED12, MED13, CCNC and CDK8 subunits form a distinct module termed the CDK8 module. Mediator containing the CDK8 module is less active than Mediator lacking this module in supporting transcriptional activation. Individual preparations of the Mediator complex lacking one or more distinct subunits have been variously termed ARC, CRSP, DRIP, PC2, SMCC and TRAP. Interacts with PPARG.

Its subcellular location is the nucleus. In terms of biological role, component of the Mediator complex, a coactivator involved in the regulated transcription of nearly all RNA polymerase II-dependent genes. Mediator functions as a bridge to convey information from gene-specific regulatory proteins to the basal RNA polymerase II transcription machinery. Mediator is recruited to promoters by direct interactions with regulatory proteins and serves as a scaffold for the assembly of a functional preinitiation complex with RNA polymerase II and the general transcription factors. The polypeptide is Mediator of RNA polymerase II transcription subunit 20 (MED20) (Macaca fascicularis (Crab-eating macaque)).